The primary structure comprises 217 residues: Uridylate kinase (217 aa).

6–10 is an ATP binding site; the sequence is KLSGR. G38 lines the UMP pocket. Residues G39 and R43 each coordinate ATP. Residues D60 and 107–113 each bind UMP; that span reads FQPGQST. ATP contacts are provided by N134, Y139, and D142.

This sequence belongs to the UMP kinase family. As to quaternary structure, homohexamer.

It is found in the cytoplasm. It catalyses the reaction UMP + ATP = UDP + ADP. The protein operates within pyrimidine metabolism; CTP biosynthesis via de novo pathway; UDP from UMP (UMPK route): step 1/1. Inhibited by UTP. In terms of biological role, catalyzes the reversible phosphorylation of UMP to UDP. The sequence is that of Uridylate kinase from Pyrobaculum neutrophilum (strain DSM 2338 / JCM 9278 / NBRC 100436 / V24Sta) (Thermoproteus neutrophilus).